A 43-amino-acid polypeptide reads, in one-letter code: Protein PsbN (43 aa).

Residues 7 to 24 form a helical membrane-spanning segment; the sequence is VAISISRSLVSFTGYALY.

The protein belongs to the PsbN family.

It localises to the plastid. It is found in the chloroplast thylakoid membrane. Functionally, may play a role in photosystem I and II biogenesis. The polypeptide is Protein PsbN (Ginkgo biloba (Ginkgo)).